We begin with the raw amino-acid sequence, 204 residues long: Prephenate decarboxylase (204 aa).

This sequence belongs to the prephenate decarboxylase family.

It is found in the cytoplasm. It catalyses the reaction prephenate + H(+) = 3-[(4R)-4-hydroxycyclohexa-1,5-dien-1-yl]-2-oxopropanoate + CO2. The protein operates within antibiotic biosynthesis; bacilysin biosynthesis. In terms of biological role, part of the bacABCDEF operon responsible for the biosynthesis of the nonribosomally synthesized dipeptide antibiotic bacilysin, composed of L-alanine and L-anticapsin. Bacilysin is an irreversible inactivator of the glutaminase domain of glucosamine synthetase. BacA is an unusual prephenate decarboxylase that avoids the typical aromatization of the cyclohexadienol ring of prephenate. BacA catalyzes the protonation of prephenate (1-carboxy-4-hydroxy-alpha-oxo-2,5-cyclohexadiene-1-propanoic acid) at C6 position, followed by a decarboxylation to produce the endocyclic-delta(4),delta(8)-7R-dihydro-hydroxyphenylpyruvate (en-H2HPP). En-H2HPP is able to undergo a slow nonenzymatic isomerization to produce the exocyclic-delta(3),delta(5)-dihydro-hydroxyphenylpyruvate (ex-H2HPP). BacA isomerizes only the pro-R double bond in prephenate. This Bacillus subtilis protein is Prephenate decarboxylase.